A 443-amino-acid chain; its full sequence is ATP-dependent protease ATPase subunit HslU (443 aa).

ATP contacts are provided by residues I18, 60–65, D256, E321, and R393; that span reads GVGKTE.

It belongs to the ClpX chaperone family. HslU subfamily. In terms of assembly, a double ring-shaped homohexamer of HslV is capped on each side by a ring-shaped HslU homohexamer. The assembly of the HslU/HslV complex is dependent on binding of ATP.

The protein localises to the cytoplasm. In terms of biological role, ATPase subunit of a proteasome-like degradation complex; this subunit has chaperone activity. The binding of ATP and its subsequent hydrolysis by HslU are essential for unfolding of protein substrates subsequently hydrolyzed by HslV. HslU recognizes the N-terminal part of its protein substrates and unfolds these before they are guided to HslV for hydrolysis. This chain is ATP-dependent protease ATPase subunit HslU, found in Photorhabdus laumondii subsp. laumondii (strain DSM 15139 / CIP 105565 / TT01) (Photorhabdus luminescens subsp. laumondii).